Reading from the N-terminus, the 1283-residue chain is MTADIRVSIDRGGTFCDVIAHVEGREPIIFKLLSVDPANYQDAPTEGIRRVLEIVEGKKIPVGEKLDGTRIASCRLGTTVATNALLEGKYEKFALVTTKGFEDVCVIGDQSRPKLFDLKVKKAEALHDTVIGVDERVTIEDYDLNPYPLDKSASLNDPDLVRTPSGEIIRILARVNEETVREQLLALRDAGYNSVAISFMHSYIFPDHEDQVAKIAREVGFTYVTTSAETRPVLKYLNRSTSCCSEACLYPVIRRYIENFESGFRVLPRRVDFMCSDGGLKQSQKFRGNEALLSGPAGGVVGIATSCYDVEQKIPIIGFDMGGTSTDVSRFDGKYDYLSETVIADRTISMPMLNISTVAAGGGSILFARSGLLVVGPESAGAHPGPACYRKGGPLTVTDANLFLGRLVVSSFPSIFGENADQPLDQDVVTAKFQEITADFNSQTSQNLTAEEVALGFLDVANEAMSRPIRNTTEARGFAPEKHNLVSFGGAGGQHACAIASKLGIKRVLIHKWSSLLSAHGISQADLQYESFEPLSLDFGMDLNGFIKERLSLLREKVAAGLLAQGAQESTLRFDESLVMKYFGTDTTITVTTPDDLDYGAAFEALHLREFAFKLNRKIVIDSVNVRGTGSAVTLATEEPPLKALARVKSVATTAQTTEEQKVYINGSWRKVPIYRLDQLSKGCAVSGPAMIIDKTQTIFVEPRFNAYILPDHVILEESNVEDTVTRQAVSAEEINPLLLSVFAHRFMSIAEQMGNTLQRTSVSSSIKERLDFSCAIFSREGKLVANAPHIPIHLGSMQMAIRYQHEAWKGKLKPGDALVTNHPLSGGTHLPDLTVVSPVFVNGDVAFYVASRGHHTDIGGKGIAAMMPESKELWEEGISIKTMKIVSGGEFLEDEIRAAFDKAGSFPGCSPTRRIADNLSDLKAQIASNQRGIILLGNLCEEFTLPVVCTYMEGIQANAEFAVRRFLKQLAKKHPEPLTAIDYFDDGTPIKIKIIIDPETGGAVYDFSGTGPQQWGNYNCPISITHSAIIYTLRCLVDVDIPLNEGCLTPIDIRVPYGSMLNPSPAVAICGSTLASQRVIDTILRAFRRCAASQGCASSFSWGMGGRDPETGKVLPGWNYGESLGGGVGALPGYHGESAINVHSTNTRNTDPEVVEKRTAVLVTKYAVRKGSGGRGQWRGGDGVTREIQARIPLKFSILSDRRVYRPYGMEGGEAGHRGQNYVFKFNQEGTGFEQINLGGKAVVVLNPGEKMQINTPGGGAWGKPEGDADGYREEDQAGDGI.

A disordered region spans residues 1256-1283 (NTPGGGAWGKPEGDADGYREEDQAGDGI). Over residues 1266–1277 (PEGDADGYREED) the composition is skewed to basic and acidic residues.

Belongs to the oxoprolinase family. As to quaternary structure, homodimer.

It catalyses the reaction 5-oxo-L-proline + ATP + 2 H2O = L-glutamate + ADP + phosphate + H(+). 5-oxoprolinase; part of the gene cluster that mediates the biosynthesis of dihydroxynaphthalene (DHN)-melanin, a bluish-green pigment forming a dark layer in the conidial wall that protects the conidia from UV radiations. The first step of the pathway is the production of the pentaketide 1,3,6,8-tetrahydroxynaphthalene (1,3,6,8-THN or T4HN) by the polyketide synthase PfmaE though condensation of acetyl-CoA with malonyl-CoA. T4HN is not stable and easily oxidizes into the stable form flaviolin. T4HN is also substrate of the hydroxynaphthalene reductase PfmaG to yield scytalone. The scytalone dehydratase PfmaJ then reduces scytalone to 1,3,8-THN. 1,3,8-THN is then substrate of the hydroxynaphthalene reductase PfmaI to yield vermelone. Vermelone is further converted by the multicopper oxidase PfmaD to 1,8-DHN. Finally the laccase PFICI_06862 transforms 1,8-DHN to DHN-melanin. The roles of the 5-oxoprolinase PfmaA and the proline iminopeptidase PfmaB within the cluster have not been elucidated yet. The polypeptide is 5-oxoprolinase PfmaA (Pestalotiopsis fici (strain W106-1 / CGMCC3.15140)).